We begin with the raw amino-acid sequence, 329 residues long: Methionyl-tRNA formyltransferase (329 aa).

117–120 (SLLP) lines the (6S)-5,6,7,8-tetrahydrofolate pocket.

The protein belongs to the Fmt family.

It catalyses the reaction L-methionyl-tRNA(fMet) + (6R)-10-formyltetrahydrofolate = N-formyl-L-methionyl-tRNA(fMet) + (6S)-5,6,7,8-tetrahydrofolate + H(+). Its function is as follows. Attaches a formyl group to the free amino group of methionyl-tRNA(fMet). The formyl group appears to play a dual role in the initiator identity of N-formylmethionyl-tRNA by promoting its recognition by IF2 and preventing the misappropriation of this tRNA by the elongation apparatus. The polypeptide is Methionyl-tRNA formyltransferase (Paracidovorax citrulli (strain AAC00-1) (Acidovorax citrulli)).